The sequence spans 355 residues: DNA polymerase IV (355 aa).

Residues 14-198 form the UmuC domain; sequence IIHVDMDAFF…LPVEKFHGVG (185 aa). The Mg(2+) site is built by Asp18 and Asp116. Glu117 is a catalytic residue.

It belongs to the DNA polymerase type-Y family. In terms of assembly, monomer. Mg(2+) is required as a cofactor.

It localises to the cytoplasm. The catalysed reaction is DNA(n) + a 2'-deoxyribonucleoside 5'-triphosphate = DNA(n+1) + diphosphate. Its function is as follows. Poorly processive, error-prone DNA polymerase involved in untargeted mutagenesis. Copies undamaged DNA at stalled replication forks, which arise in vivo from mismatched or misaligned primer ends. These misaligned primers can be extended by PolIV. Exhibits no 3'-5' exonuclease (proofreading) activity. May be involved in translesional synthesis, in conjunction with the beta clamp from PolIII. The chain is DNA polymerase IV from Streptococcus suis (strain 98HAH33).